A 348-amino-acid polypeptide reads, in one-letter code: UPF0324 membrane protein BH02290 (348 aa).

Transmembrane regions (helical) follow at residues 13 to 35 (AFLNDFSPGILACLIISVLAYGL), 45 to 67 (QAWLESLVLAILLGSITGSCFTL), 74 to 96 (GITFCAKTLLEIAIVLLGASISV), 106 to 128 (LLASIIFVIFVTLILSFTIGRLF), 135 to 157 (AMLVACGNAICGNSAIVAVAPVI), 167 to 189 (SIAFTALLGVLIILFLPFLHPFL), 196 to 218 (YGVLSGMVVYAVPQVLAATASVS), 223 to 245 (QIATVVKLVRVLMLGPLIFALSI), 257 to 275 (LHTLVPWFIIGFIFMMLIR), 285 to 307 (LIPIRFIAQLFTVISMAALGLGV), and 319 to 341 (VILASTCSILILGVCSLIMIQLN).

Belongs to the UPF0324 family.

Its subcellular location is the cell membrane. This Bartonella henselae (strain ATCC 49882 / DSM 28221 / CCUG 30454 / Houston 1) (Rochalimaea henselae) protein is UPF0324 membrane protein BH02290.